A 423-amino-acid chain; its full sequence is Adenylosuccinate synthetase (423 aa).

Residues 12–18 and 40–42 each bind GTP; these read GDEGKGK and GHT. Asp-13 serves as the catalytic Proton acceptor. Mg(2+) is bound by residues Asp-13 and Gly-40. IMP-binding positions include 13–16, 38–41, Thr-129, Arg-143, Gln-221, Thr-236, and Arg-300; these read DEGK and NAGH. The active-site Proton donor is the His-41. 296-302 lines the substrate pocket; it reads SVTGRKR. Residues Arg-302 and 408–410 contribute to the GTP site; that span reads SVG.

The protein belongs to the adenylosuccinate synthetase family. In terms of assembly, homodimer. It depends on Mg(2+) as a cofactor.

It localises to the cytoplasm. It catalyses the reaction IMP + L-aspartate + GTP = N(6)-(1,2-dicarboxyethyl)-AMP + GDP + phosphate + 2 H(+). The protein operates within purine metabolism; AMP biosynthesis via de novo pathway; AMP from IMP: step 1/2. Functionally, plays an important role in the de novo pathway of purine nucleotide biosynthesis. Catalyzes the first committed step in the biosynthesis of AMP from IMP. This Bacteroides thetaiotaomicron (strain ATCC 29148 / DSM 2079 / JCM 5827 / CCUG 10774 / NCTC 10582 / VPI-5482 / E50) protein is Adenylosuccinate synthetase.